The primary structure comprises 280 residues: Hydrolase MT0498 (280 aa).

Positions 1–251 (MRIALAQIRS…PQLLVADIDV (251 aa)) constitute a CN hydrolase domain. E40 functions as the Proton acceptor in the catalytic mechanism. The active-site Proton donor is K110. The Nucleophile role is filled by C146.

It belongs to the carbon-nitrogen hydrolase superfamily. NIT1/NIT2 family.

The chain is Hydrolase MT0498 from Mycobacterium tuberculosis (strain CDC 1551 / Oshkosh).